The chain runs to 476 residues: Probable periplasmic serine endoprotease DegP-like (476 aa).

The signal sequence occupies residues methionine 1–alanine 27. Catalysis depends on charge relay system residues histidine 116, aspartate 146, and serine 219. Residues glycine 217–serine 219 and leucine 274–isoleucine 278 contribute to the substrate site. PDZ domains are found at residues leucine 263 to glycine 354 and glutamate 360 to glycine 465.

Belongs to the peptidase S1C family.

It is found in the periplasm. The catalysed reaction is Acts on substrates that are at least partially unfolded. The cleavage site P1 residue is normally between a pair of hydrophobic residues, such as Val-|-Val.. Might be efficient in the degradation of transiently denatured and unfolded proteins which accumulate in the periplasm following stress conditions. The polypeptide is Probable periplasmic serine endoprotease DegP-like (mucD) (Pseudomonas fluorescens (strain ATCC BAA-477 / NRRL B-23932 / Pf-5)).